We begin with the raw amino-acid sequence, 105 residues long: Small ribosomal subunit protein uS10 (105 aa).

It belongs to the universal ribosomal protein uS10 family. Part of the 30S ribosomal subunit.

In terms of biological role, involved in the binding of tRNA to the ribosomes. The sequence is that of Small ribosomal subunit protein uS10 from Rickettsia rickettsii (strain Iowa).